A 31-amino-acid chain; its full sequence is Toxin BmKK16 (31 aa).

Glutamine 1 carries the pyrrolidone carboxylic acid modification. 3 disulfides stabilise this stretch: cysteine 4–cysteine 20, cysteine 10–cysteine 25, and cysteine 14–cysteine 27. The residue at position 31 (proline 31) is a Proline amide.

The protein belongs to the short scorpion toxin superfamily. Potassium channel inhibitor family. Alpha-KTx 17 subfamily. In terms of processing, the N-terminus is blocked. Expressed by the venom gland.

The protein resides in the secreted. Blocker of potassium channels (Kv). This is Toxin BmKK16 from Olivierus martensii (Manchurian scorpion).